The primary structure comprises 213 residues: Octanoyltransferase (213 aa).

A BPL/LPL catalytic domain is found at 35-213 (DKHGDAVLLL…ERHLPTLVGA (179 aa)). Residues 73 to 80 (RGGKITWH), 145 to 147 (AIG), and 158 to 160 (GFS) contribute to the substrate site. The active-site Acyl-thioester intermediate is the Cys-176.

Belongs to the LipB family.

It is found in the cytoplasm. The enzyme catalyses octanoyl-[ACP] + L-lysyl-[protein] = N(6)-octanoyl-L-lysyl-[protein] + holo-[ACP] + H(+). The protein operates within protein modification; protein lipoylation via endogenous pathway; protein N(6)-(lipoyl)lysine from octanoyl-[acyl-carrier-protein]: step 1/2. Functionally, catalyzes the transfer of endogenously produced octanoic acid from octanoyl-acyl-carrier-protein onto the lipoyl domains of lipoate-dependent enzymes. Lipoyl-ACP can also act as a substrate although octanoyl-ACP is likely to be the physiological substrate. The sequence is that of Octanoyltransferase from Salinispora arenicola (strain CNS-205).